The chain runs to 286 residues: Ribosomal RNA small subunit methyltransferase A (286 aa).

N28, L30, G55, E77, D103, and N123 together coordinate S-adenosyl-L-methionine.

This sequence belongs to the class I-like SAM-binding methyltransferase superfamily. rRNA adenine N(6)-methyltransferase family. RsmA subfamily.

The protein resides in the cytoplasm. The catalysed reaction is adenosine(1518)/adenosine(1519) in 16S rRNA + 4 S-adenosyl-L-methionine = N(6)-dimethyladenosine(1518)/N(6)-dimethyladenosine(1519) in 16S rRNA + 4 S-adenosyl-L-homocysteine + 4 H(+). Specifically dimethylates two adjacent adenosines (A1518 and A1519) in the loop of a conserved hairpin near the 3'-end of 16S rRNA in the 30S particle. May play a critical role in biogenesis of 30S subunits. The polypeptide is Ribosomal RNA small subunit methyltransferase A (Bradyrhizobium sp. (strain BTAi1 / ATCC BAA-1182)).